The primary structure comprises 149 residues: MKLHNLRPAKGGEVKARKRVGRGYGSGLGHNAGRGRDGQNSRSGGGVRPGFEGGQMPLFRRLPKRGFKNHFAKQYAEINIRDLNCFEDGEEITPEILANAGFFKPAKAKDGVKILGDGEITKKLTIKANKFTKSAEEKITKAGGKVEVI.

Positions 1-58 (MKLHNLRPAKGGEVKARKRVGRGYGSGLGHNAGRGRDGQNSRSGGGVRPGFEGGQMPL) are disordered. 2 stretches are compositionally biased toward gly residues: residues 22–32 (RGYGSGLGHNA) and 43–53 (SGGGVRPGFEG).

The protein belongs to the universal ribosomal protein uL15 family. In terms of assembly, part of the 50S ribosomal subunit.

In terms of biological role, binds to the 23S rRNA. This Finegoldia magna (strain ATCC 29328 / DSM 20472 / WAL 2508) (Peptostreptococcus magnus) protein is Large ribosomal subunit protein uL15.